The following is a 118-amino-acid chain: Beta-2-microglobulin (118 aa).

The signal sequence occupies residues 1-20 (MAVSAALVLLGLLSLSGLDA). One can recognise an Ig-like C1-type domain in the interval 25 to 112 (PEVQVYSRHP…HVTLTQPKIV (88 aa)). A disulfide bond links C45 and C99.

The protein belongs to the beta-2-microglobulin family. As to quaternary structure, heterodimer of an alpha chain and a beta chain. Beta-2-microglobulin is the beta-chain of major histocompatibility complex class I molecules.

It is found in the secreted. Its function is as follows. Component of the class I major histocompatibility complex (MHC). Involved in the presentation of peptide antigens to the immune system. The sequence is that of Beta-2-microglobulin (B2M) from Ovis aries (Sheep).